The chain runs to 98 residues: MTAKAQHYDVIRKPIITEKATLASENGAVVFEVAIDSNKPQIKEAVEALFGVKVKAVNTTITKGKTKRFRGTPGKRKDVKKAYVTLEEGNTIDVSTGL.

The protein belongs to the universal ribosomal protein uL23 family. As to quaternary structure, part of the 50S ribosomal subunit. Contacts protein L29, and trigger factor when it is bound to the ribosome.

In terms of biological role, one of the early assembly proteins it binds 23S rRNA. One of the proteins that surrounds the polypeptide exit tunnel on the outside of the ribosome. Forms the main docking site for trigger factor binding to the ribosome. The polypeptide is Large ribosomal subunit protein uL23 (Dinoroseobacter shibae (strain DSM 16493 / NCIMB 14021 / DFL 12)).